The sequence spans 834 residues: MKYFIIRSLINKSKNFYNTIIKYNKTKLFALELSIISPQEIQNSAEYKREDGSIVGKVEDSTFYDLEKVNNKNLFSQQIFGPLIDFTCACGKKLNRKNKEINVCTKCGIEFLPSSIRSKRKGYIKLNYAMLHPFYIDYCEKLLMKSKKSLHLLLNMDSFFYFPSYKNWVNFLSEKNHIYLFLLKKILIYNRYSYIYKYSTFFKNRSKFPNNKKMNKLFFYNALGFYGLNSRKTWTVLDFIKGYNFFLGNFSKYYKKLSWYAYQQKISLNKYKSNNISINNFIDNTFNFYKNEVNSLCFKVGGDGIEMFFLQDMAVYSIINKFLKLRVLKLNNLINVNNKYYGKINTIIQNSKNYQYYFKHFYLKKIAPVWMTLRRIPVLPPNLRPILDLSGKNYQKTASSGTLLFMRDIMHEGNLFISDINTFYREIIIHNKKAFNFFSSLPTLYYLNELNIEYVNSKLWLLKYYLMPIQKSITSLFDKNPETINNFSNKKFTDLILDNVKPTSILDSLKGKYGKIRFNLLGKRVDYSGRSVIISAPHLKIYECGIPYEMALTLYYPFLSEYFYKKNNNILKKNYNKSELVLYSKSLIFTKSLQSILLSHPIIINRAPTLHRLGIQSFLPKLTHSKAIELHPLVCPAFNADFDGDQMAIHVPITEIAKLEAIQLMASSLFVYAPASGLPLLIPTQDIILGFNFYTNDLLLKTSREDKSIKQAMNQGFINECHIPYWIKINTKDIFFKFLAYPLRNYIIPIELQLNIKGFSKIIRLNTFKVTNLVFDSLDLLIKKNYISNWLILNNTKFKYLLISFLQNKNLLTNKQVYLRTTLGNIYFNKYLNL.

Residues Cys-88, Cys-90, Cys-104, and Cys-107 each contribute to the Zn(2+) site. Positions 641, 643, and 645 each coordinate Mg(2+).

This sequence belongs to the RNA polymerase beta' chain family. RpoC1 subfamily. As to quaternary structure, in plastids the minimal PEP RNA polymerase catalytic core is composed of four subunits: alpha, beta, beta', and beta''. When a (nuclear-encoded) sigma factor is associated with the core the holoenzyme is formed, which can initiate transcription. Mg(2+) is required as a cofactor. Requires Zn(2+) as cofactor.

The protein localises to the plastid. The enzyme catalyses RNA(n) + a ribonucleoside 5'-triphosphate = RNA(n+1) + diphosphate. In terms of biological role, DNA-dependent RNA polymerase catalyzes the transcription of DNA into RNA using the four ribonucleoside triphosphates as substrates. The chain is DNA-directed RNA polymerase subunit beta' (rpoC1) from Helicosporidium sp. subsp. Simulium jonesii (Green alga).